We begin with the raw amino-acid sequence, 188 residues long: Guanylate kinase (188 aa).

The Guanylate kinase-like domain maps to Arg4 to Arg183. Residue Ala11–Thr18 participates in ATP binding.

Belongs to the guanylate kinase family.

The protein resides in the cytoplasm. The enzyme catalyses GMP + ATP = GDP + ADP. Its function is as follows. Essential for recycling GMP and indirectly, cGMP. The chain is Guanylate kinase from Salinibacter ruber (strain DSM 13855 / M31).